Here is a 124-residue protein sequence, read N- to C-terminus: Glycine cleavage system H protein (124 aa).

Residues 19–101 enclose the Lipoyl-binding domain; that stretch reads TGTVGITDYA…AGKGWFLQIK (83 aa). Residue Lys60 is modified to N6-lipoyllysine.

Belongs to the GcvH family. As to quaternary structure, the glycine cleavage system is composed of four proteins: P, T, L and H. It depends on (R)-lipoate as a cofactor.

Its function is as follows. The glycine cleavage system catalyzes the degradation of glycine. The H protein shuttles the methylamine group of glycine from the P protein to the T protein. In Beijerinckia indica subsp. indica (strain ATCC 9039 / DSM 1715 / NCIMB 8712), this protein is Glycine cleavage system H protein.